The chain runs to 287 residues: Homoserine kinase (287 aa).

An ATP-binding site is contributed by 79–89 (PLARGLGSSSS).

The protein belongs to the GHMP kinase family. Homoserine kinase subfamily.

Its subcellular location is the cytoplasm. The catalysed reaction is L-homoserine + ATP = O-phospho-L-homoserine + ADP + H(+). It participates in amino-acid biosynthesis; L-threonine biosynthesis; L-threonine from L-aspartate: step 4/5. Its function is as follows. Catalyzes the ATP-dependent phosphorylation of L-homoserine to L-homoserine phosphate. This chain is Homoserine kinase, found in Enterococcus faecalis (strain ATCC 700802 / V583).